We begin with the raw amino-acid sequence, 528 residues long: Golgi resident protein GCP60 (528 aa).

Residues 1–71 (MAAVLNAERL…EAAAGGAAEE (71 aa)) form a disordered region. Position 2 is an N-acetylalanine; in Golgi resident protein GCP60, N-terminally processed (Ala-2). Ser-13 carries the post-translational modification Phosphoserine. Thr-18 is subject to Phosphothreonine. 3 positions are modified to phosphoserine: Ser-20, Ser-43, and Ser-47. The span at 34-45 (LLPPPLPPPSPP) shows a compositional bias: pro residues. The segment covering 54–69 (SGEQPEPGEAAAGGAA) has biased composition (low complexity). In terms of domain architecture, ACB spans 83–174 (LEELYGLALR…LNRCCHLFST (92 aa)). A coiled-coil region spans residues 174-257 (TYVASHKIEK…AALNSQTAVQ (84 aa)). The tract at residues 182 to 230 (EKEEQEKKRKEEEERRRREEEERERLQKEEEKRRREEEERLRREEEERR) is disordered. Residues 182 to 240 (EKEEQEKKRKEEEERRRREEEERERLQKEEEKRRREEEERLRREEEERRRIEEERLRLE) are charged amino-acid region (CAR). The interval 241–308 (QQKQQIMAAL…QQQAALQKQQ (68 aa)) is q domain; Interaction with PI4KB, TBC1D22A and TBC1D22B. Residues 335 to 362 (NGQAKTHTDSSEKELEPEAAEEALENGP) form a disordered region. Positions 340 to 350 (THTDSSEKELE) are enriched in basic and acidic residues. The GOLD domain maps to 384 to 526 (KEKIQQDADS…SKSVYYRVYY (143 aa)). The segment at 514–516 (LWR) is membrane-binding.

In terms of assembly, homodimer. Interacts with the C-terminal cytoplasmic domain of giantin/GOLGB1. Interacts with PBR and PKA regulatory subunit RI-alpha. Does not interact with PKA regulatory subunit RI-beta nor PKA regulatory subunit RII-alpha. Interacts (via Q domain) with PI4KB (via N-terminus). Interacts (via Q domain) with TBC1D22A and TBC1D22B; interactions with PI4KB and with TBC1D22A and TBC1D22B are mutually exclusive. Interacts with C10ORF76 and RAB11B. As to quaternary structure, (Microbial infection) Interacts (via GOLD domain) with 3A proteins from various picornaviruses, including poliovirus, enterovirus A71, enterovirus D68, hepatitis A virus, human parechovirus 1, poliovirus, Human rhinovirus-14 (Hrv-14), coysackievirus B2, coysackievirus B3, coysackievirus B5, Aichi virus and human klassevirus. Interacts (via GOLD domain) with Aichi virus protein 3A; this interaction allows the formation of a 3A/ACBD3/PI4KB complex in order to synthesize PI4P at the viral RNA replication sites. Interacts with Aichi virus protein 2B. Interacts with Aichi virus protein 2C. Ubiquitous, with highest expression in testis and ovary.

It localises to the golgi apparatus membrane. It is found in the mitochondrion. Functionally, involved in the maintenance of Golgi structure by interacting with giantin, affecting protein transport between the endoplasmic reticulum and Golgi. Involved in hormone-induced steroid biosynthesis in testicular Leydig cells. Recruits PI4KB to the Golgi apparatus membrane; enhances the enzyme activity of PI4KB activity via its membrane recruitment thereby increasing the local concentration of the substrate in the vicinity of the kinase. (Microbial infection) Plays an essential role in Aichi virus RNA replication by recruiting PI4KB at the viral replication sites. The protein is Golgi resident protein GCP60 (ACBD3) of Homo sapiens (Human).